The chain runs to 368 residues: NAD(P)H-quinone oxidoreductase subunit 1, chloroplastic (368 aa).

A run of 9 helical transmembrane segments spans residues 11-31 (RVIN…LIWI), 33-53 (IYIL…VWLE), 98-118 (WLFS…YLVI), 131-151 (IGVF…LMAG), 177-197 (LALC…VDIV), 205-225 (FWGW…ISSL), 255-275 (FGLF…FVTI), 305-325 (VLGI…FLFI), and 348-368 (FLLP…LLLL).

It belongs to the complex I subunit 1 family. In terms of assembly, NDH is composed of at least 16 different subunits, 5 of which are encoded in the nucleus.

The protein resides in the plastid. The protein localises to the chloroplast thylakoid membrane. The catalysed reaction is a plastoquinone + NADH + (n+1) H(+)(in) = a plastoquinol + NAD(+) + n H(+)(out). The enzyme catalyses a plastoquinone + NADPH + (n+1) H(+)(in) = a plastoquinol + NADP(+) + n H(+)(out). In terms of biological role, NDH shuttles electrons from NAD(P)H:plastoquinone, via FMN and iron-sulfur (Fe-S) centers, to quinones in the photosynthetic chain and possibly in a chloroplast respiratory chain. The immediate electron acceptor for the enzyme in this species is believed to be plastoquinone. Couples the redox reaction to proton translocation, and thus conserves the redox energy in a proton gradient. This Cycas taitungensis (Prince sago) protein is NAD(P)H-quinone oxidoreductase subunit 1, chloroplastic.